Consider the following 379-residue polypeptide: Sperm microtubule associated protein 2 (379 aa).

The interval 1–82 (MGDSRRRSLG…EFPETLDPKE (82 aa)) is disordered. Composition is skewed to basic and acidic residues over residues 19-29 (GRSEREQDGDP) and 38-50 (ESRR…RQDL). Positions 56–76 (GPEDPEEELPPEEVAGEEFPE) are enriched in acidic residues. THEG repeat units follow at residues 118–137 (KARK…PKIN), 184–203 (TITV…PKRF), 222–241 (SSLE…PKIR), 258–277 (AAQM…PKAP), 290–309 (PKPH…PKAQ), and 326–345 (VTKK…PKVR). Serine 295 bears the Phosphoserine mark. Residues 344 to 379 (VRKGLNEGYDRRPLASMSLPPPKASPEKCDQPRPGL) form a disordered region. Basic and acidic residues-rich tracts occupy residues 347 to 356 (GLNEGYDRRP) and 368 to 379 (SPEKCDQPRPGL).

As to quaternary structure, interacts with CCT5. As to expression, testis specific.

It localises to the nucleus. Functionally, may be involved (but not essential) in spermatogenesis. This Homo sapiens (Human) protein is Sperm microtubule associated protein 2.